Here is a 110-residue protein sequence, read N- to C-terminus: Ribonuclease P protein component 4 (110 aa).

Zn(2+) contacts are provided by Cys-65, Cys-68, Cys-94, and Cys-97.

This sequence belongs to the eukaryotic/archaeal RNase P protein component 4 family. Consists of a catalytic RNA component and at least 4-5 protein subunits. Zn(2+) serves as cofactor.

It is found in the cytoplasm. The enzyme catalyses Endonucleolytic cleavage of RNA, removing 5'-extranucleotides from tRNA precursor.. Part of ribonuclease P, a protein complex that generates mature tRNA molecules by cleaving their 5'-ends. This is Ribonuclease P protein component 4 from Methanococcus maripaludis (strain C6 / ATCC BAA-1332).